The chain runs to 299 residues: tRNA dimethylallyltransferase (299 aa).

11–18 (GPTAVGKT) lines the ATP pocket. Residue 13 to 18 (TAVGKT) coordinates substrate. The interval 36 to 39 (DSQQ) is interaction with substrate tRNA.

Belongs to the IPP transferase family. In terms of assembly, monomer. Requires Mg(2+) as cofactor.

The catalysed reaction is adenosine(37) in tRNA + dimethylallyl diphosphate = N(6)-dimethylallyladenosine(37) in tRNA + diphosphate. Functionally, catalyzes the transfer of a dimethylallyl group onto the adenine at position 37 in tRNAs that read codons beginning with uridine, leading to the formation of N6-(dimethylallyl)adenosine (i(6)A). In Streptococcus pyogenes serotype M49 (strain NZ131), this protein is tRNA dimethylallyltransferase.